A 216-amino-acid polypeptide reads, in one-letter code: DNA gyrase subunit B (216 aa).

Residues 140-216 enclose the Toprim domain; it reads SELYLVEGDS…PDKLRYHKII (77 aa).

Belongs to the type II topoisomerase GyrB family. In terms of assembly, heterotetramer, composed of two GyrA and two GyrB chains. In the heterotetramer, GyrA contains the active site tyrosine that forms a transient covalent intermediate with DNA, while GyrB binds cofactors and catalyzes ATP hydrolysis.

It localises to the cytoplasm. It catalyses the reaction ATP-dependent breakage, passage and rejoining of double-stranded DNA.. Its function is as follows. A type II topoisomerase that negatively supercoils closed circular double-stranded (ds) DNA in an ATP-dependent manner to modulate DNA topology and maintain chromosomes in an underwound state. Negative supercoiling favors strand separation, and DNA replication, transcription, recombination and repair, all of which involve strand separation. Also able to catalyze the interconversion of other topological isomers of dsDNA rings, including catenanes and knotted rings. Type II topoisomerases break and join 2 DNA strands simultaneously in an ATP-dependent manner. The polypeptide is DNA gyrase subunit B (gyrB) (Acinetobacter venetianus (strain ATCC 31012 / DSM 23050 / BCRC 14357 / CCUG 45561 / CIP 110063 / KCTC 2702 / LMG 19082 / RAG-1)).